The primary structure comprises 204 residues: ATP phosphoribosyltransferase (204 aa).

Belongs to the ATP phosphoribosyltransferase family. Short subfamily. As to quaternary structure, heteromultimer composed of HisG and HisZ subunits.

The protein localises to the cytoplasm. The enzyme catalyses 1-(5-phospho-beta-D-ribosyl)-ATP + diphosphate = 5-phospho-alpha-D-ribose 1-diphosphate + ATP. It participates in amino-acid biosynthesis; L-histidine biosynthesis; L-histidine from 5-phospho-alpha-D-ribose 1-diphosphate: step 1/9. In terms of biological role, catalyzes the condensation of ATP and 5-phosphoribose 1-diphosphate to form N'-(5'-phosphoribosyl)-ATP (PR-ATP). Has a crucial role in the pathway because the rate of histidine biosynthesis seems to be controlled primarily by regulation of HisG enzymatic activity. This chain is ATP phosphoribosyltransferase, found in Staphylococcus aureus (strain MRSA252).